We begin with the raw amino-acid sequence, 90 residues long: Small ribosomal subunit protein bS18 (90 aa).

A compositionally biased stretch (basic and acidic residues) spans 1-14 (MARDNGNKDRDGKR). Positions 1-23 (MARDNGNKDRDGKRPNGGRNRKM) are disordered.

It belongs to the bacterial ribosomal protein bS18 family. In terms of assembly, part of the 30S ribosomal subunit. Forms a tight heterodimer with protein bS6.

Functionally, binds as a heterodimer with protein bS6 to the central domain of the 16S rRNA, where it helps stabilize the platform of the 30S subunit. The protein is Small ribosomal subunit protein bS18 of Clostridium acetobutylicum (strain ATCC 824 / DSM 792 / JCM 1419 / IAM 19013 / LMG 5710 / NBRC 13948 / NRRL B-527 / VKM B-1787 / 2291 / W).